We begin with the raw amino-acid sequence, 236 residues long: MTDFLPAFWAVIPAAGIGARMAADRPKQYLQLGGLTILEHSLLCFLDHPRLKGLVISLAVDDPYWAALPCAHDSRIQRVDGGRERSGSVLNALLHLHAQGASDDDWVLVHDAARPNLARSDLDNLLGQLADDPVGGLLAVPARDTLKRADSDGRVVETVDRSLIWQAFTPQMFRLGTLHRALADSLVSNVSITDEASAIEWAGQSPRLIEGRSDNIKVTRPEDLEWLRQRRSEFGR.

This sequence belongs to the IspD/TarI cytidylyltransferase family. IspD subfamily.

It catalyses the reaction 2-C-methyl-D-erythritol 4-phosphate + CTP + H(+) = 4-CDP-2-C-methyl-D-erythritol + diphosphate. The protein operates within isoprenoid biosynthesis; isopentenyl diphosphate biosynthesis via DXP pathway; isopentenyl diphosphate from 1-deoxy-D-xylulose 5-phosphate: step 2/6. Functionally, catalyzes the formation of 4-diphosphocytidyl-2-C-methyl-D-erythritol from CTP and 2-C-methyl-D-erythritol 4-phosphate (MEP). The protein is 2-C-methyl-D-erythritol 4-phosphate cytidylyltransferase of Pseudomonas syringae pv. tomato (strain ATCC BAA-871 / DC3000).